Reading from the N-terminus, the 101-residue chain is MIPGEYQIQDGDIELNAGRRTLTLCVANSGDRPIQVGSHYHFFETNDALTFDRAASRGMRLNIPAGTAVRFEPGQSREVELVELAGERRVFGFAGRVMGAL.

Belongs to the urease beta subunit family. As to quaternary structure, heterotrimer of UreA (gamma), UreB (beta) and UreC (alpha) subunits. Three heterotrimers associate to form the active enzyme.

The protein localises to the cytoplasm. The enzyme catalyses urea + 2 H2O + H(+) = hydrogencarbonate + 2 NH4(+). Its pathway is nitrogen metabolism; urea degradation; CO(2) and NH(3) from urea (urease route): step 1/1. This is Urease subunit beta from Stutzerimonas stutzeri (strain A1501) (Pseudomonas stutzeri).